The chain runs to 93 residues: Long neurotoxin 2 (93 aa).

The first 21 residues, 1–21 (MKILLLTLVVVTIVCLDLAYT), serve as a signal peptide directing secretion. 5 cysteine pairs are disulfide-bonded: Cys-24–Cys-42, Cys-35–Cys-63, Cys-48–Cys-52, Cys-67–Cys-78, and Cys-79–Cys-84.

The protein belongs to the three-finger toxin family. Long-chain subfamily. Type II alpha-neurotoxin sub-subfamily. Expressed by the venom gland.

The protein resides in the secreted. Its function is as follows. Binds with high affinity to muscular (alpha-1/CHRNA1) and neuronal (alpha-7/CHRNA7) nicotinic acetylcholine receptor (nAChR) and inhibits acetylcholine from binding to the receptor, thereby impairing neuromuscular and neuronal transmission. This Hydrophis hardwickii (Hardwick's spine-bellied seasnake) protein is Long neurotoxin 2.